The primary structure comprises 273 residues: Chondrolectin (273 aa).

Positions 1 to 21 are cleaved as a signal peptide; the sequence is MIRIASLLLGAALLCAQGAFA. The Extracellular segment spans residues 22–216; sequence RRVVSGQKVC…VVTEAGIIPN (195 aa). The 145-residue stretch at 35-179 folds into the C-type lectin domain; it reads VKHPCYKMAY…CNMKHNYICK (145 aa). Disulfide bonds link Cys61–Cys178 and Cys144–Cys170. Asn86 carries an N-linked (GlcNAc...) asparagine glycan. A helical transmembrane segment spans residues 217-237; sequence LIYVIIPTIPLLLLILVALGT. Over 238 to 273 the chain is Cytoplasmic; sequence CCFQMLHKSKGRSKTSPNQSTLWISKSTRKESGMEV. Residues 247-273 form a disordered region; sequence KGRSKTSPNQSTLWISKSTRKESGMEV. Residues 251–263 are compositionally biased toward polar residues; sequence KTSPNQSTLWISK.

Interacts with RABGGTB. In terms of tissue distribution, in adult mice preferentially expressed in skeletal muscle, testis, brain, and lung. Expressed in striated muscle (at protein level). Expressed in spinal cord. Detected in spinal cord fast motor neurons (at protein level).

The protein resides in the membrane. Its function is as follows. May play a role in the development of the nervous system such as in neurite outgrowth and elongation. May be involved in motor axon growth and guidance. The chain is Chondrolectin (Chodl) from Mus musculus (Mouse).